A 740-amino-acid polypeptide reads, in one-letter code: ATP-dependent RNA helicase DDX1 (740 aa).

The segment at 1 to 295 (MAAFSEMGVM…APKALIVEPS (295 aa)) is necessary for interaction with HNRNPK. Residues 1–448 (MAAFSEMGVM…DTVHHVVVPV (448 aa)) are interaction with dsRNA. The necessary for interaction with RELA stretch occupies residues 1–525 (MAAFSEMGVM…KIDCDNLEQY (525 aa)). Residues 2–428 (AAFSEMGVMP…SEKIMHFPTW (427 aa)) form the Helicase ATP-binding domain. 46–53 (AETGSGKT) serves as a coordination point for ATP. The B30.2/SPRY domain occupies 70 to 247 (DQQEGKKGKA…LKFNFGEEEF (178 aa)). 2 positions are modified to N6-acetyllysine: Lys239 and Lys268. An N6-acetyllysine; alternate modification is found at Lys281. Residue Lys281 forms a Glycyl lysine isopeptide (Lys-Gly) (interchain with G-Cter in SUMO2); alternate linkage. The DEAD box signature appears at 370-373 (DEAD). Ser481 is subject to Phosphoserine. The region spanning 493–681 (KGEYAVRAIK…QVEPDIKVPV (189 aa)) is the Helicase C-terminal domain. Positions 525-740 (YFMQQGGGPD…YLPNQLFRTF (216 aa)) are necessary for interaction with HNRNPK.

This sequence belongs to the DEAD box helicase family. DDX1 subfamily. In terms of assembly, found in a multi-helicase-TICAM1 complex at least composed of DHX36, DDX1, DDX21 and TICAM1; this complex exists in resting cells with or without poly(I:C) RNA ligand stimulation. Interacts with DHX36. Interacts (via B30.2/SPRY domain) with DDX21 (via N-terminus); this interaction serves as bridges to TICAM1. Interacts with FAM98A (via N- and C-terminus). Interacts with PHF5A (via C-terminus). Interacts with MBNL1. Interacts with CSTF2. Interacts with HNRNPK. Interacts with ATM. Interacts with RELA (via C-terminus). Component of the tRNA-splicing ligase complex. Interacts with PQBP1. Interacts with ERCC6. In terms of processing, phosphorylated by ATM kinase; phosphorylation is increased in response to ionizing radiation (IR).

It is found in the nucleus. The protein resides in the cytoplasm. It localises to the cytoplasmic granule. Its subcellular location is the cytosol. The protein localises to the mitochondrion. The catalysed reaction is ATP + H2O = ADP + phosphate + H(+). Acts as an ATP-dependent RNA helicase, able to unwind both RNA-RNA and RNA-DNA duplexes. Possesses 5' single-stranded RNA overhang nuclease activity. Possesses ATPase activity on various RNA, but not DNA polynucleotides. May play a role in RNA clearance at DNA double-strand breaks (DSBs), thereby facilitating the template-guided repair of transcriptionally active regions of the genome. Together with RELA, acts as a coactivator to enhance NF-kappa-B-mediated transcriptional activation. Acts as a positive transcriptional regulator of cyclin CCND2 expression. Binds to the cyclin CCND2 promoter region. Associates with chromatin at the NF-kappa-B promoter region via association with RELA. Binds to poly(A) RNA. May be involved in 3'-end cleavage and polyadenylation of pre-mRNAs. Component of the tRNA-splicing ligase complex required to facilitate the enzymatic turnover of catalytic subunit RTCB: together with archease (ZBTB8OS), acts by facilitating the guanylylation of RTCB, a key intermediate step in tRNA ligation. Component of a multi-helicase-TICAM1 complex that acts as a cytoplasmic sensor of viral double-stranded RNA (dsRNA) and plays a role in the activation of a cascade of antiviral responses including the induction of pro-inflammatory cytokines via the adapter molecule TICAM1. Specifically binds (via helicase ATP-binding domain) on both short and long poly(I:C) dsRNA. The sequence is that of ATP-dependent RNA helicase DDX1 (DDX1) from Bos taurus (Bovine).